The primary structure comprises 111 residues: Large ribosomal subunit protein uL22 (111 aa).

It belongs to the universal ribosomal protein uL22 family. As to quaternary structure, part of the 50S ribosomal subunit.

This protein binds specifically to 23S rRNA; its binding is stimulated by other ribosomal proteins, e.g. L4, L17, and L20. It is important during the early stages of 50S assembly. It makes multiple contacts with different domains of the 23S rRNA in the assembled 50S subunit and ribosome. In terms of biological role, the globular domain of the protein is located near the polypeptide exit tunnel on the outside of the subunit, while an extended beta-hairpin is found that lines the wall of the exit tunnel in the center of the 70S ribosome. The protein is Large ribosomal subunit protein uL22 of Chlamydia felis (strain Fe/C-56) (Chlamydophila felis).